The chain runs to 610 residues: Estrogen receptor beta-2 (610 aa).

Residues 1 to 170 (MSSSTGPAPA…GILGKGDTHF (170 aa)) form a modulating region. 2 consecutive NR C4-type zinc fingers follow at residues 171–191 (CAVC…CEGC) and 207–231 (CPAT…LRKC). Residues 171–236 (CAVCHDYASG…RLRKCYEVGM (66 aa)) constitute a DNA-binding region (nuclear receptor). Positions 302–538 (SPEQLVNCIL…DLLLEMLDAN (237 aa)) constitute an NR LBD domain. The segment at 566-596 (HTSKQQPALKESNQDTRHSPQAEGTVDKTLH) is disordered. Positions 577–596 (SNQDTRHSPQAEGTVDKTLH) are enriched in basic and acidic residues.

This sequence belongs to the nuclear hormone receptor family. NR3 subfamily. In terms of assembly, binds DNA as a homodimer. Can form a heterodimer with ER-alpha. In terms of tissue distribution, predominantly expressed in pituitary, telencephalon and hypothalamus as well as in the liver.

The protein resides in the nucleus. In terms of biological role, binds estrogens with an affinity similar to that of ER-alpha, and activates expression of reporter genes containing estrogen response elements (ERE) in an estrogen-dependent manner. The sequence is that of Estrogen receptor beta-2 (esr2b) from Carassius auratus (Goldfish).